Here is a 754-residue protein sequence, read N- to C-terminus: NAD(P)H-quinone oxidoreductase subunit 5, chloroplastic (754 aa).

Transmembrane regions (helical) follow at residues Phe8–Leu28, Trp40–Ile60, Val89–Ile109, Phe125–Ile145, Ile147–Thr167, Gly185–Phe205, Asn219–Ala239, Thr258–Ala278, Leu280–Ile300, Leu327–Ile347, Ala354–Ser374, Thr396–Ser416, Trp425–Tyr445, Phe552–Phe572, Phe608–Phe628, and Leu733–Phe753.

The protein belongs to the complex I subunit 5 family. NDH is composed of at least 16 different subunits, 5 of which are encoded in the nucleus.

The protein resides in the plastid. It localises to the chloroplast thylakoid membrane. It catalyses the reaction a plastoquinone + NADH + (n+1) H(+)(in) = a plastoquinol + NAD(+) + n H(+)(out). The catalysed reaction is a plastoquinone + NADPH + (n+1) H(+)(in) = a plastoquinol + NADP(+) + n H(+)(out). NDH shuttles electrons from NAD(P)H:plastoquinone, via FMN and iron-sulfur (Fe-S) centers, to quinones in the photosynthetic chain and possibly in a chloroplast respiratory chain. The immediate electron acceptor for the enzyme in this species is believed to be plastoquinone. Couples the redox reaction to proton translocation, and thus conserves the redox energy in a proton gradient. The chain is NAD(P)H-quinone oxidoreductase subunit 5, chloroplastic (ndhF) from Morus indica (Mulberry).